A 506-amino-acid polypeptide reads, in one-letter code: MPGLGRRAQWLCWWWGLLCSCGPPPLRPPLPVAAAAAGGQLLGAGGSPVRAEQPPPQSSSSGFLYRRLKTHEKREMQKEILSVLGLPHRPRPLHGLQQPQSPVLPQQQQSQQTAREEPPPGRLKSAPLFMLDLYNSLSKDDEEDGVSEGEGLEPESHGRASSSQLKQPSPGAAHSLNRKSLLAPGPGGSASPLTSAQDSAFLNDADMVMSFVNLVEYDKEFSPRQRHHKEFKFNLSQIPEGEAVTAAEFRVYKDCVVGSFKNQTFLISIYQVLQEHQHRDSDLFLLDTRVVWASEEGWLEFDITATSNLWVVTPQHNMGLQLSVVTRDGLHINPRAAGLVGRDGPYDKQPFMVAFFKVSEVHVRTTRSASSRRRQQSRNRSTQSQDVSRGSSASDYNSSELKTACKKHELYVSFQDLGWQDWIIAPKGYAANYCDGECSFPLNAHMNATNHAIVQTLVHLMNPEYVPKPCCAPTKLNAISVLYFDDNSNVILKKYRNMVVRACGCH.

A signal peptide spans 1–20; sequence MPGLGRRAQWLCWWWGLLCS. Residues 21 to 367 constitute a propeptide that is removed on maturation; it reads CGPPPLRPPL…VSEVHVRTTR (347 aa). 3 disordered regions span residues 44 to 64, 87 to 125, and 139 to 195; these read AGGS…SGFL, PHRP…RLKS, and KDDE…PLTS. Positions 96 to 112 are enriched in low complexity; it reads LQQPQSPVLPQQQQSQQ. Residues 140–153 show a composition bias toward acidic residues; it reads DDEEDGVSEGEGLE. Residues N234, N262, N379, N397, and N447 are each glycosylated (N-linked (GlcNAc...) asparagine). Residues 366-397 form a disordered region; sequence TRSASSRRRQQSRNRSTQSQDVSRGSSASDYN. Polar residues predominate over residues 386–397; the sequence is DVSRGSSASDYN. 3 disulfide bridges follow: C405/C471, C434/C503, and C438/C505.

This sequence belongs to the TGF-beta family. Interacts with SOSTDC1. Interacts (when glycosylated) with type I receptor ACVR1; the interaction may induce HAMP expression. Interacts with type II receptor ACVR2B. Interacts with Hemojuvelin/HJV. Interacts with ERFE; the interaction inhibits BMP-induced transcription of HAMP. Interacts with BMPR1A/ALK3. Forms heterodimers with BMP2 in vitro; the heterodimer then binds to its receptor BMPR1A /ALK3 and may induce HAMP expression.

It localises to the secreted. In terms of biological role, growth factor of the TGF-beta superfamily that plays essential roles in many developmental processes including cartilage and bone formation. Also plays an important role in the regulation of HAMP/hepcidin expression and iron metabolism by acting as a ligand for hemojuvelin/HJV. Also acts to promote expression of HAMP, potentially via the interaction with its receptor BMPR1A/ALK3. Initiates the canonical BMP signaling cascade by associating with type I receptor ACVR1 and type II receptor ACVR2B. In turn, ACVR1 propagates signal by phosphorylating SMAD1/5/8 that travel to the nucleus and act as activators and repressors of transcription of target. Can also signal through non-canonical pathway such as TAZ-Hippo signaling cascade to modulate VEGF signaling by regulating VEGFR2 expression. In Rattus norvegicus (Rat), this protein is Bone morphogenetic protein 6 (Bmp6).